The primary structure comprises 178 residues: ATP-dependent protease subunit HslV (178 aa).

T5 is a catalytic residue. The Na(+) site is built by A160, C163, and T166.

It belongs to the peptidase T1B family. HslV subfamily. As to quaternary structure, a double ring-shaped homohexamer of HslV is capped on each side by a ring-shaped HslU homohexamer. The assembly of the HslU/HslV complex is dependent on binding of ATP.

It is found in the cytoplasm. The enzyme catalyses ATP-dependent cleavage of peptide bonds with broad specificity.. Allosterically activated by HslU binding. Functionally, protease subunit of a proteasome-like degradation complex believed to be a general protein degrading machinery. The protein is ATP-dependent protease subunit HslV of Magnetococcus marinus (strain ATCC BAA-1437 / JCM 17883 / MC-1).